Reading from the N-terminus, the 82-residue chain is uncharacterized protein (82 aa).

Residues 55–64 (DQNTAPSTPS) are compositionally biased toward polar residues. Positions 55 to 82 (DQNTAPSTPSKILPKRLPSQSNLNNNNN) are disordered.

This is an uncharacterized protein from Dictyostelium discoideum (Social amoeba).